The primary structure comprises 319 residues: 4-hydroxy-3-methylbut-2-enyl diphosphate reductase (319 aa).

Cysteine 17 serves as a coordination point for [4Fe-4S] cluster. (2E)-4-hydroxy-3-methylbut-2-enyl diphosphate contacts are provided by histidine 46 and histidine 79. Dimethylallyl diphosphate is bound by residues histidine 46 and histidine 79. Positions 46 and 79 each coordinate isopentenyl diphosphate. A [4Fe-4S] cluster-binding site is contributed by cysteine 101. Histidine 129 contributes to the (2E)-4-hydroxy-3-methylbut-2-enyl diphosphate binding site. A dimethylallyl diphosphate-binding site is contributed by histidine 129. Histidine 129 is a binding site for isopentenyl diphosphate. Catalysis depends on glutamate 131, which acts as the Proton donor. Threonine 170 contacts (2E)-4-hydroxy-3-methylbut-2-enyl diphosphate. Cysteine 200 serves as a coordination point for [4Fe-4S] cluster. Positions 228, 229, 230, and 273 each coordinate (2E)-4-hydroxy-3-methylbut-2-enyl diphosphate. The dimethylallyl diphosphate site is built by serine 228, serine 229, asparagine 230, and serine 273. Isopentenyl diphosphate is bound by residues serine 228, serine 229, asparagine 230, and serine 273.

The protein belongs to the IspH family. [4Fe-4S] cluster serves as cofactor.

It catalyses the reaction isopentenyl diphosphate + 2 oxidized [2Fe-2S]-[ferredoxin] + H2O = (2E)-4-hydroxy-3-methylbut-2-enyl diphosphate + 2 reduced [2Fe-2S]-[ferredoxin] + 2 H(+). It carries out the reaction dimethylallyl diphosphate + 2 oxidized [2Fe-2S]-[ferredoxin] + H2O = (2E)-4-hydroxy-3-methylbut-2-enyl diphosphate + 2 reduced [2Fe-2S]-[ferredoxin] + 2 H(+). Its pathway is isoprenoid biosynthesis; dimethylallyl diphosphate biosynthesis; dimethylallyl diphosphate from (2E)-4-hydroxy-3-methylbutenyl diphosphate: step 1/1. The protein operates within isoprenoid biosynthesis; isopentenyl diphosphate biosynthesis via DXP pathway; isopentenyl diphosphate from 1-deoxy-D-xylulose 5-phosphate: step 6/6. In terms of biological role, catalyzes the conversion of 1-hydroxy-2-methyl-2-(E)-butenyl 4-diphosphate (HMBPP) into a mixture of isopentenyl diphosphate (IPP) and dimethylallyl diphosphate (DMAPP). Acts in the terminal step of the DOXP/MEP pathway for isoprenoid precursor biosynthesis. In Cereibacter sphaeroides (strain ATCC 17029 / ATH 2.4.9) (Rhodobacter sphaeroides), this protein is 4-hydroxy-3-methylbut-2-enyl diphosphate reductase.